Reading from the N-terminus, the 245-residue chain is uncharacterized protein (245 aa).

A signal peptide spans 1 to 20 (MIKQTIVALLLSVGASSVFA).

The protein to E.coli YmcB.

This is an uncharacterized protein from Escherichia coli (strain K12).